Consider the following 361-residue polypeptide: Deoxyhypusine hydroxylase (361 aa).

HEAT-like PBS-type repeat units lie at residues leucine 59–asparagine 85, valine 94–aspartate 120, glutamine 183–aspartate 211, and phenylalanine 216–aspartate 242. The Fe cation site is built by histidine 61, glutamate 62, histidine 96, and glutamate 97. 4 residues coordinate Fe cation: histidine 218, glutamate 219, histidine 251, and glutamate 252.

This sequence belongs to the deoxyhypusine hydroxylase family. It depends on Fe(2+) as a cofactor.

It is found in the cytoplasm. It localises to the nucleus. The catalysed reaction is [eIF5A protein]-deoxyhypusine + AH2 + O2 = [eIF5A protein]-hypusine + A + H2O. It participates in protein modification; eIF5A hypusination. Catalyzes the hydroxylation of the N(6)-(4-aminobutyl)-L-lysine intermediate to form hypusine, an essential post-translational modification only found in mature eIF-5A factor. The protein is Deoxyhypusine hydroxylase of Cryptococcus neoformans var. neoformans serotype D (strain B-3501A) (Filobasidiella neoformans).